A 318-amino-acid polypeptide reads, in one-letter code: C1GALT1-specific chaperone 1 (318 aa).

Over 1–6 (MLSESS) the chain is Cytoplasmic. The chain crosses the membrane as a helical; Signal-anchor for type II membrane protein span at residues 7–26 (SFLKGVMLGSIFCALITMLG). Over 27–318 (HIRIGHGSRM…FLPPNGSDND (292 aa)) the chain is Lumenal.

It belongs to the glycosyltransferase 31 family. Beta3-Gal-T subfamily. Associates with core 1 beta-3-galactosyltransferase (C1GALT1), probably not with the soluble active form.

Its subcellular location is the membrane. Its function is as follows. Probable chaperone required for the generation of 1 O-glycan Gal-beta1-3GalNAc-alpha1-Ser/Thr (T antigen), which is a precursor for many extended O-glycans in glycoproteins. Probably acts as a specific molecular chaperone assisting the folding/stability of core 1 beta-3-galactosyltransferase (C1GALT1). The chain is C1GALT1-specific chaperone 1 (C1GALT1C1) from Bos taurus (Bovine).